Here is a 117-residue protein sequence, read N- to C-terminus: Hainantoxin-XV.2 (117 aa).

The signal sequence occupies residues 1 to 20 (MKLCAVIIASLLVCAAVASS). Positions 18 to 55 (ASSSDNQKEFAQEKEMTREETQSLGEHEKDDEVTGSEE) are disordered. Positions 21–56 (SDNQKEFAQEKEMTREETQSLGEHEKDDEVTGSEER) are excised as a propeptide. The segment covering 23–55 (NQKEFAQEKEMTREETQSLGEHEKDDEVTGSEE) has biased composition (basic and acidic residues). Cystine bridges form between Cys-58-Cys-72, Cys-65-Cys-78, Cys-69-Cys-115, and Cys-71-Cys-91.

Belongs to the neurotoxin 03 (Tx2) family. 02 subfamily. HNTX-XV sub-subfamily. Expressed by the venom gland.

The protein resides in the secreted. Its function is as follows. Putative ion channel inhibitor. This is Hainantoxin-XV.2 from Cyriopagopus hainanus (Chinese bird spider).